The sequence spans 1008 residues: PWWP domain-containing protein 3 (1008 aa).

Residues 78–122 adopt a coiled-coil conformation; that stretch reads VSSLLKLKEDVEEEEEEEEEEEEEEEDGEDEEEEEEEEEEEEEEE. The disordered stretch occupies residues 84-124; sequence LKEDVEEEEEEEEEEEEEEEDGEDEEEEEEEEEEEEEEEHG. Acidic residues predominate over residues 87-122; the sequence is DVEEEEEEEEEEEEEEEDGEDEEEEEEEEEEEEEEE. In terms of domain architecture, PWWP spans 127–188; sequence VGDFVWGKIK…ASQLKPFAES (62 aa). Disordered stretches follow at residues 307–339, 399–606, and 668–874; these read EYHE…GLQW, ETEP…LGQE, and NHKF…GPGS. Positions 321-330 are enriched in acidic residues; that stretch reads NNDDDDDDEE. Over residues 399–409 the composition is skewed to basic and acidic residues; the sequence is ETEPADGDVKS. Residues 473–490 show a composition bias toward acidic residues; it reads DDGDDDGSGDKEESEEKE. 3 stretches are compositionally biased toward basic and acidic residues: residues 511–522, 677–687, and 707–725; these read RFDDSVVERSTE, SSDKEKEELSE, and QKAE…TDKH. Residues 726-738 show a composition bias toward basic residues; the sequence is GKMKKERKRKKSE. Composition is skewed to basic and acidic residues over residues 739 to 758, 768 to 787, and 794 to 818; these read SKKE…ESTK, SKKQ…ESTK, and NPES…ESTK. 3 short sequence motifs (nuclear localization signal) span residues 786–793, 809–816, and 841–848; these read TKKERKRK, TRKESVES, and EKKKKKKR. Positions 804 to 824 form a coiled coil; it reads VEEEETRKESVESTKKERKRK. Positions 842–854 are enriched in basic residues; that stretch reads KKKKKKREGKSKK.

Belongs to the PDP family. In terms of assembly, interacts with DEK3. Binds to LHP1, MSI4/FVE and MSI5. Component of the PRC2 (polycomb repressive complex 2) complex which regulates histone methylation on histone H3K27.

The protein localises to the nucleus. Together with PDP1, PDP2 and PDP6, interacts with MSI4/FVE and MSI5 to suppress FLC, MAF4 and MAF5 expression by regulating the function of the PRC2 complex and modulating H3K27me3 level, thereby promoting flowering. This chain is PWWP domain-containing protein 3, found in Arabidopsis thaliana (Mouse-ear cress).